Reading from the N-terminus, the 288-residue chain is GDSL esterase/lipase At3g43550 (288 aa).

The first 19 residues, 1 to 19, serve as a signal peptide directing secretion; the sequence is MKLQIIWLALVLIAVETYA. Asn25 is a glycosylation site (N-linked (GlcNAc...) asparagine). The active-site Nucleophile is the Ser37.

It belongs to the 'GDSL' lipolytic enzyme family.

The protein localises to the secreted. The polypeptide is GDSL esterase/lipase At3g43550 (Arabidopsis thaliana (Mouse-ear cress)).